Here is a 232-residue protein sequence, read N- to C-terminus: Histone H1A (232 aa).

The span at 1–18 (MSDPAVEVTPAVPVASPA) shows a compositional bias: low complexity. Disordered stretches follow at residues 1 to 42 (MSDP…THLP) and 98 to 232 (LQTK…AKKA). Residues 39–113 (THLPVSDMVV…GASGSFKLPA (75 aa)) form the H15 domain. Composition is skewed to basic residues over residues 131–141 (KPKKAAAPKPK), 147–173 (KVKK…KTTK), 181–214 (AAKK…KAKK), and 222–232 (KAAKKPAAKKA).

It belongs to the histone H1/H5 family.

It is found in the nucleus. The protein localises to the chromosome. In terms of biological role, histones H1 are necessary for the condensation of nucleosome chains into higher-order structures. The protein is Histone H1A of Chironomus tentans (Midge).